Consider the following 131-residue polypeptide: Translation initiation factor 5A (131 aa).

Lys-37 is modified (hypusine).

Belongs to the eIF-5A family.

The protein resides in the cytoplasm. Functions by promoting the formation of the first peptide bond. This is Translation initiation factor 5A (eIF5A) from Methanococcus maripaludis (strain C6 / ATCC BAA-1332).